The following is a 154-amino-acid chain: 6,7-dimethyl-8-ribityllumazine synthase (154 aa).

5-amino-6-(D-ribitylamino)uracil is bound by residues W23, 57–59, and 81–83; these read AFE and AVI. 86 to 87 is a binding site for (2S)-2-hydroxy-3-oxobutyl phosphate; that stretch reads AT. The Proton donor role is filled by H89. F114 is a binding site for 5-amino-6-(D-ribitylamino)uracil. Residue R128 participates in (2S)-2-hydroxy-3-oxobutyl phosphate binding.

It belongs to the DMRL synthase family.

It catalyses the reaction (2S)-2-hydroxy-3-oxobutyl phosphate + 5-amino-6-(D-ribitylamino)uracil = 6,7-dimethyl-8-(1-D-ribityl)lumazine + phosphate + 2 H2O + H(+). It functions in the pathway cofactor biosynthesis; riboflavin biosynthesis; riboflavin from 2-hydroxy-3-oxobutyl phosphate and 5-amino-6-(D-ribitylamino)uracil: step 1/2. In terms of biological role, catalyzes the formation of 6,7-dimethyl-8-ribityllumazine by condensation of 5-amino-6-(D-ribitylamino)uracil with 3,4-dihydroxy-2-butanone 4-phosphate. This is the penultimate step in the biosynthesis of riboflavin. The protein is 6,7-dimethyl-8-ribityllumazine synthase of Sulfurimonas denitrificans (strain ATCC 33889 / DSM 1251) (Thiomicrospira denitrificans (strain ATCC 33889 / DSM 1251)).